We begin with the raw amino-acid sequence, 147 residues long: ATP synthase subunit 9, mitochondrial (147 aa).

Residues 1–66 constitute a mitochondrion transit peptide; the sequence is MASTRVLASR…TTRQAFQKRA (66 aa). Helical transmembrane passes span 86-106 and 123-143; these read SAAIGLTGAGIGIGLVFAALL and AILGFAFVEAIGLFDLMVALM.

Belongs to the ATPase C chain family. F-type ATPases have 2 components, CF(1) - the catalytic core - and CF(0) - the membrane proton channel. CF(1) has five subunits: alpha(3), beta(3), gamma(1), delta(1), epsilon(1). CF(0) has three main subunits: a, b and c.

The protein resides in the mitochondrion membrane. Mitochondrial membrane ATP synthase (F(1)F(0) ATP synthase or Complex V) produces ATP from ADP in the presence of a proton gradient across the membrane which is generated by electron transport complexes of the respiratory chain. F-type ATPases consist of two structural domains, F(1) - containing the extramembraneous catalytic core and F(0) - containing the membrane proton channel, linked together by a central stalk and a peripheral stalk. During catalysis, ATP synthesis in the catalytic domain of F(1) is coupled via a rotary mechanism of the central stalk subunits to proton translocation. Part of the complex F(0) domain. A homomeric c-ring of probably 10 subunits is part of the complex rotary element. This is ATP synthase subunit 9, mitochondrial (oli) from Neurospora crassa (strain ATCC 24698 / 74-OR23-1A / CBS 708.71 / DSM 1257 / FGSC 987).